A 225-amino-acid chain; its full sequence is tRNA (guanine-N(1)-)-methyltransferase (225 aa).

S-adenosyl-L-methionine contacts are provided by residues Gly-112 and 132–137 (IGDYVL).

Belongs to the RNA methyltransferase TrmD family. Homodimer.

The protein localises to the cytoplasm. It carries out the reaction guanosine(37) in tRNA + S-adenosyl-L-methionine = N(1)-methylguanosine(37) in tRNA + S-adenosyl-L-homocysteine + H(+). Its function is as follows. Specifically methylates guanosine-37 in various tRNAs. This is tRNA (guanine-N(1)-)-methyltransferase from Porphyromonas gingivalis (strain ATCC BAA-308 / W83).